The sequence spans 354 residues: Protein RecA (354 aa).

Position 65–72 (65–72 (GPESSGKT)) interacts with ATP.

Belongs to the RecA family.

The protein localises to the cytoplasm. Functionally, can catalyze the hydrolysis of ATP in the presence of single-stranded DNA, the ATP-dependent uptake of single-stranded DNA by duplex DNA, and the ATP-dependent hybridization of homologous single-stranded DNAs. It interacts with LexA causing its activation and leading to its autocatalytic cleavage. This Vibrio cholerae serotype O1 (strain ATCC 39315 / El Tor Inaba N16961) protein is Protein RecA.